The chain runs to 245 residues: MLIVLPPSETKTHGGSGKPLDFHHLSFPSLTKARQTILADLQALEVDEALKVLGISEKLRPEAESNRALETSPTMPAIFRYSGVLYDALDAATLPEKALERLAIGSALFGVIHATDPIPHYRLSGGTKLPTKSGELPTMKARWGTSISEALIDVNQLVIDLRSGTYQQLGRVKDAVTVRVESVMEDGSRKVVSHFNKHYKGELARVLALSEKEAHNAEDVMSIAQAAGLVVEENPNHKETLTLVV.

Belongs to the UPF0246 family.

In Corynebacterium glutamicum (strain ATCC 13032 / DSM 20300 / JCM 1318 / BCRC 11384 / CCUG 27702 / LMG 3730 / NBRC 12168 / NCIMB 10025 / NRRL B-2784 / 534), this protein is UPF0246 protein Cgl1995/cg2186.